The following is a 168-amino-acid chain: Probable chemoreceptor glutamine deamidase CheD (168 aa).

This sequence belongs to the CheD family.

The enzyme catalyses L-glutaminyl-[protein] + H2O = L-glutamyl-[protein] + NH4(+). Its function is as follows. Probably deamidates glutamine residues to glutamate on methyl-accepting chemotaxis receptors (MCPs), playing an important role in chemotaxis. This Pseudomonas syringae pv. tomato (strain ATCC BAA-871 / DC3000) protein is Probable chemoreceptor glutamine deamidase CheD.